The primary structure comprises 419 residues: Probable G-protein coupled receptor 63 (419 aa).

Topologically, residues 1–81 (MVFSAVLTAF…AFKSLNLPLQ (81 aa)) are extracellular. N-linked (GlcNAc...) asparagine glycosylation is found at Asn16, Asn28, and Asn62. Residues 82–104 (ITLSAIMIFILFVSFLGNLVVCL) form a helical membrane-spanning segment. At 105-115 (MVYQKAAMRSA) the chain is on the cytoplasmic side. A helical transmembrane segment spans residues 116-138 (INILLASLAFADMLLAVLNMPFA). Over 139–157 (LVTILTTRWIFGKFFCRVS) the chain is Extracellular. Residues 158–177 (AMFFWLFVIEGVAILLIISI) form a helical membrane-spanning segment. The Cytoplasmic portion of the chain corresponds to 178–196 (DRFLIIVQRQDKLNPYRAK). Residues 197-216 (VLIAVSWATSFCVAFPLAVG) traverse the membrane as a helical segment. Residues 217-240 (NPDLQIPSRAPQCVFGYTTNPGYQ) are Extracellular-facing. The helical transmembrane segment at 241 to 263 (AYVILISLISFFIPFLVILYSFM) threads the bilayer. The Cytoplasmic segment spans residues 264 to 315 (GILNTLRHNALRIHSYPEGICLSQASKLGLMSLQRPFQMSIDMGFKTRAFTT). Residues 316-338 (ILILFAVFIVCWAPFTTYSLVAT) form a helical membrane-spanning segment. Over 339–352 (FSKHFYYQHNFFEI) the chain is Extracellular. A helical membrane pass occupies residues 353 to 375 (STWLLWLCYLKSALNPLIYYWRI). The Cytoplasmic portion of the chain corresponds to 376–419 (KKFHDACLDMMPKSFKFLPQLPGHTKRRIRPSAVYVCGEHRTVV).

This sequence belongs to the G-protein coupled receptor 1 family. Expressed in brain; detected in the frontal cortex, with lower levels in the thalamus, caudate, hypothalamus and midbrain.

The protein localises to the cell membrane. In terms of biological role, orphan receptor. May play a role in brain function. This Homo sapiens (Human) protein is Probable G-protein coupled receptor 63 (GPR63).